Consider the following 36-residue polypeptide: Cytochrome b6-f complex subunit 7 (36 aa).

Residues 9-29 traverse the membrane as a helical segment; that stretch reads NGAFIMIGLTLLGLAWGFVII.

This sequence belongs to the PetM family. As to quaternary structure, the 4 large subunits of the cytochrome b6-f complex are cytochrome b6, subunit IV (17 kDa polypeptide, PetD), cytochrome f and the Rieske protein, while the 4 small subunits are PetG, PetL, PetM and PetN. The complex functions as a dimer.

Its subcellular location is the cellular thylakoid membrane. Component of the cytochrome b6-f complex, which mediates electron transfer between photosystem II (PSII) and photosystem I (PSI), cyclic electron flow around PSI, and state transitions. This Synechocystis sp. (strain ATCC 27184 / PCC 6803 / Kazusa) protein is Cytochrome b6-f complex subunit 7.